The primary structure comprises 136 residues: Neuropeptide CCHamide-2 (136 aa).

The N-terminal stretch at 1–24 is a signal peptide; that stretch reads MKSTISLLLVVICTVVLAAQQSQA. The cysteines at positions 28 and 35 are disulfide-linked. At His39 the chain carries Histidine amide. The segment at 42–78 is disordered; it reads RSLSPGSGSGTGVGGGMGEAASGGQEPDYVRPNGLLP. A propeptide spanning residues 43–136 is cleaved from the precursor; sequence SLSPGSGSGT…ANSAELNGVN (94 aa). Residues 48-59 show a composition bias toward gly residues; it reads SGSGTGVGGGMG.

As to expression, expressed in endocrine cells of the larval midgut (at protein level). Also expressed in endocrine cells of the midgut of adult males and females (at protein level). In the midgut, expression occurs mainly in the anterior region (at protein level). In the larval central nervous system, expressed in about 40 neurons in the brain hemispheres and ventral nerve cord (at protein level). Highly expressed in larval and adult gut with low levels in larval and adult brain. Very little expression in the larval fat body. However, another study shows high levels of expression in the larval fat body as well as the larval gut with low levels in the larval central nervous system.

It is found in the secreted. Its function is as follows. Ligand for the CCHamide-2 receptor CCHa2-R. In one study, shown to be an orexigenic peptide which induces appetite and stimulates food intake, leading to the release of insulin-like peptides which stimulate growth. In another study, shown to be a nutrient-sensitive peptide derived from peripheral tissues which controls growth by directly regulating the production and release of insulin-like peptides. The sequence is that of Neuropeptide CCHamide-2 from Drosophila melanogaster (Fruit fly).